The sequence spans 1132 residues: Rho GTPase-activating protein gacE (1132 aa).

One can recognise a Rho-GAP domain in the interval 76–262 (LEMNKILKSE…FLISNYLNVF (187 aa)). Disordered stretches follow at residues 279-354 (NELL…SSPI) and 472-517 (NSTT…SLIN). The span at 281 to 301 (LLNNNNNNNNVIMPTTTTTTT) shows a compositional bias: low complexity. The segment covering 302–311 (SASSSILPTD) has biased composition (polar residues). Low complexity-rich tracts occupy residues 328–354 (SIPL…SSPI), 473–498 (STTT…STTT), and 507–517 (SNSASNNSLIN).

Its subcellular location is the cytoplasm. Functionally, rho GTPase-activating protein involved in the signal transduction pathway. This Dictyostelium discoideum (Social amoeba) protein is Rho GTPase-activating protein gacE (gacE).